A 551-amino-acid chain; its full sequence is Pentatricopeptide repeat-containing protein At3g13150 (551 aa).

Positions 22–67 (ATAKSAKPRSQTKSTKFPSKLKASTASVGDGGQSSNDAKDSKNSKL) are disordered. A compositionally biased stretch (polar residues) spans 29–48 (PRSQTKSTKFPSKLKASTAS). The span at 58-67 (DAKDSKNSKL) shows a compositional bias: basic and acidic residues. PPR repeat units follow at residues 121–155 (SEDF…NCER), 156–191 (TVKS…GITP), 192–226 (DLVT…GFEP), 227–261 (DLIS…NLSP), 262–296 (NIRS…GISP), 297–331 (DVHT…GLTP), and 332–366 (DTVT…KLLS). Disordered stretches follow at residues 409–435 (GKKK…SPDT) and 449–551 (SSSD…LLDD). The span at 415-435 (SSPVSSSAKTTSTPVSSSPDT) shows a compositional bias: low complexity.

This sequence belongs to the PPR family. P subfamily.

This is Pentatricopeptide repeat-containing protein At3g13150 from Arabidopsis thaliana (Mouse-ear cress).